Reading from the N-terminus, the 229-residue chain is Guanylate kinase (229 aa).

In terms of domain architecture, RPE1 insert spans 7-42 (RVLQKCAYREEFKGDMERSTAATSKLPLEVELSRNS). In terms of domain architecture, Guanylate kinase-like spans 44-222 (GLIIILSSPS…TLKKIHAIIV (179 aa)). 51–58 (SPSGTGKS) is an ATP binding site.

Belongs to the guanylate kinase family.

The protein localises to the cytoplasm. The enzyme catalyses GMP + ATP = GDP + ADP. Essential for recycling GMP and indirectly, cGMP. The polypeptide is Guanylate kinase (gmk) (Rickettsia conorii (strain ATCC VR-613 / Malish 7)).